The chain runs to 518 residues: Bifunctional purine biosynthesis protein PurH (518 aa).

Positions 1 to 144 (MSKRALISVS…KNHASVTVVC (144 aa)) constitute an MGS-like domain.

Belongs to the PurH family.

The catalysed reaction is (6R)-10-formyltetrahydrofolate + 5-amino-1-(5-phospho-beta-D-ribosyl)imidazole-4-carboxamide = 5-formamido-1-(5-phospho-D-ribosyl)imidazole-4-carboxamide + (6S)-5,6,7,8-tetrahydrofolate. The enzyme catalyses IMP + H2O = 5-formamido-1-(5-phospho-D-ribosyl)imidazole-4-carboxamide. It participates in purine metabolism; IMP biosynthesis via de novo pathway; 5-formamido-1-(5-phospho-D-ribosyl)imidazole-4-carboxamide from 5-amino-1-(5-phospho-D-ribosyl)imidazole-4-carboxamide (10-formyl THF route): step 1/1. Its pathway is purine metabolism; IMP biosynthesis via de novo pathway; IMP from 5-formamido-1-(5-phospho-D-ribosyl)imidazole-4-carboxamide: step 1/1. The sequence is that of Bifunctional purine biosynthesis protein PurH from Lactococcus lactis subsp. lactis (strain IL1403) (Streptococcus lactis).